We begin with the raw amino-acid sequence, 918 residues long: Calcium-transporting ATPase type 2C member 1 (918 aa).

Residues Met1 to Tyr75 lie on the Cytoplasmic side of the membrane. The helical transmembrane segment at Ile76–Leu96 threads the bilayer. Residues Met97–His98 lie on the Extracellular side of the membrane. Residues Gln99 to Val119 form a helical membrane-spanning segment. Topologically, residues Gln120 to Lys267 are cytoplasmic. A helical membrane pass occupies residues Gln268–Gly288. The Extracellular segment spans residues Lys289 to Ala302. A helical membrane pass occupies residues Val303–Met323. At Arg324 to Arg703 the chain is on the cytoplasmic side. Catalysis depends on Asp350, which acts as the 4-aspartylphosphate intermediate. Mg(2+)-binding residues include Asp643 and Asp647. Residues Phe704–Phe724 traverse the membrane as a helical segment. The Extracellular portion of the chain corresponds to Pro725–Gln732. A helical membrane pass occupies residues Ile733–Val753. The Cytoplasmic segment spans residues Asp754–Asn773. The chain crosses the membrane as a helical span at residues Leu774 to Trp794. Residues Arg795 to Met842 lie on the Extracellular side of the membrane. Residues Phe843–Leu863 form a helical membrane-spanning segment. The Cytoplasmic segment spans residues Gln864 to Ser873. The chain crosses the membrane as a helical span at residues Ile874–Ile894. The Extracellular portion of the chain corresponds to Lys895–Val918.

It belongs to the cation transport ATPase (P-type) (TC 3.A.3) family. Type IIA subfamily. As to quaternary structure, monomer. Homodimer.

Its subcellular location is the golgi apparatus. It localises to the trans-Golgi network membrane. The protein localises to the golgi stack membrane. It carries out the reaction Ca(2+)(in) + ATP + H2O = Ca(2+)(out) + ADP + phosphate + H(+). The catalysed reaction is Mn(2+)(in) + ATP + H2O = Mn(2+)(out) + ADP + phosphate + H(+). ATP-driven pump that supplies the Golgi apparatus with Ca(2+) and Mn(2+) ions, both essential cofactors for processing and trafficking of newly synthesized proteins in the secretory pathway. Within a catalytic cycle, acquires Ca(2+) or Mn(2+) ions on the cytoplasmic side of the membrane and delivers them to the lumenal side. The transfer of ions across the membrane is coupled to ATP hydrolysis and is associated with a transient phosphorylation that shifts the pump conformation from inward-facing to outward-facing state. Plays a primary role in the maintenance of Ca(2+) homeostasis in the trans-Golgi compartment with a functional impact on Golgi and post-Golgi protein sorting as well as a structural impact on cisternae morphology. Responsible for loading the Golgi stores with Ca(2+) ions in keratinocytes, contributing to keratinocyte differentiation and epidermis integrity. Participates in Ca(2+) and Mn(2+) ions uptake into the Golgi store of hippocampal neurons and regulates protein trafficking required for neural polarity. May also play a role in the maintenance of Ca(2+) and Mn(2+) homeostasis and signaling in the cytosol while preventing cytotoxicity. This Pongo abelii (Sumatran orangutan) protein is Calcium-transporting ATPase type 2C member 1 (ATP2C1).